We begin with the raw amino-acid sequence, 342 residues long: MSETSIGPVALTMGDPAGIGPDITLSVWAKRADRPTPPFLYVGDPALLAARAKLLGQTVPICETDCPGAVAAFRQALPVWPVRSPAPVIPGNPDAANASAVTDAIDTAVRLVLAGEASALATNPISKAVLYEAGFRFPGHTEYLADLAARATGVAALPVMMLAGPKLRAVPVTIHIPLKDVPAALTPDLIYETCTITAADLRSRFGLPAPRLAIAGLNPHAGEGGALGREDDAVIRPVIDRLRAEGLDVVGPLPADTMFHDRARETYDVAICMYHDQALIPAKALGFDDSVNVTLGLPFIRTSPDHGTAFSLAGKGIAREESLLAALRLAAELARNAGGTKR.

2 residues coordinate substrate: histidine 140 and threonine 141. The a divalent metal cation site is built by histidine 175, histidine 220, and histidine 275. Substrate is bound by residues lysine 283, asparagine 292, and arginine 301.

The protein belongs to the PdxA family. In terms of assembly, homodimer. It depends on Zn(2+) as a cofactor. The cofactor is Mg(2+). Requires Co(2+) as cofactor.

The protein localises to the cytoplasm. It carries out the reaction 4-(phosphooxy)-L-threonine + NAD(+) = 3-amino-2-oxopropyl phosphate + CO2 + NADH. The protein operates within cofactor biosynthesis; pyridoxine 5'-phosphate biosynthesis; pyridoxine 5'-phosphate from D-erythrose 4-phosphate: step 4/5. Its function is as follows. Catalyzes the NAD(P)-dependent oxidation of 4-(phosphooxy)-L-threonine (HTP) into 2-amino-3-oxo-4-(phosphooxy)butyric acid which spontaneously decarboxylates to form 3-amino-2-oxopropyl phosphate (AHAP). The sequence is that of 4-hydroxythreonine-4-phosphate dehydrogenase from Rhizobium meliloti (strain 1021) (Ensifer meliloti).